A 78-amino-acid chain; its full sequence is Small ribosomal subunit protein uS17 (78 aa).

Belongs to the universal ribosomal protein uS17 family. Part of the 30S ribosomal subunit.

Its function is as follows. One of the primary rRNA binding proteins, it binds specifically to the 5'-end of 16S ribosomal RNA. This chain is Small ribosomal subunit protein uS17, found in Wolbachia pipientis wMel.